A 127-amino-acid polypeptide reads, in one-letter code: Phosphoribosyl-AMP cyclohydrolase (127 aa).

Residue D75 coordinates Mg(2+). C76 contributes to the Zn(2+) binding site. Residues D77 and D79 each contribute to the Mg(2+) site. Zn(2+) is bound by residues C93 and C100.

This sequence belongs to the PRA-CH family. Homodimer. Requires Mg(2+) as cofactor. It depends on Zn(2+) as a cofactor.

The protein resides in the cytoplasm. It catalyses the reaction 1-(5-phospho-beta-D-ribosyl)-5'-AMP + H2O = 1-(5-phospho-beta-D-ribosyl)-5-[(5-phospho-beta-D-ribosylamino)methylideneamino]imidazole-4-carboxamide. It participates in amino-acid biosynthesis; L-histidine biosynthesis; L-histidine from 5-phospho-alpha-D-ribose 1-diphosphate: step 3/9. Catalyzes the hydrolysis of the adenine ring of phosphoribosyl-AMP. The sequence is that of Phosphoribosyl-AMP cyclohydrolase from Desulfotalea psychrophila (strain LSv54 / DSM 12343).